The following is a 266-amino-acid chain: Norfluorocurarine synthase 1 (266 aa).

The 111-residue stretch at H11–S121 folds into the AB hydrolase-1 domain. Active-site residues include S86, D216, and H244.

The protein belongs to the AB hydrolase superfamily. In terms of assembly, homodimer. As to expression, mainly expressed in roots.

The enzyme catalyses 17-dehydropreakuammicine + H2O = norfluorocurarine + methanol + CO2. The protein operates within alkaloid biosynthesis. In terms of biological role, hydrolase involved in the biosynthesis of curare monoterpene indole alkaloids (MIAs), natural products such as strychnine, a neurotoxic compound used as a pesticide to control rodents, and its pharmacologically active derivatives, including brucine, used to regulate blood pressure. Curare alkaloids act as animal glycine receptor antagonists. Catalyzes the conversion of dehydropreakuammicine to norfluorocurarine. This is Norfluorocurarine synthase 1 from Strychnos nux-vomica (Poison nut).